A 492-amino-acid polypeptide reads, in one-letter code: KAT8 regulatory NSL complex subunit 2 (492 aa).

Residue K78 forms a Glycyl lysine isopeptide (Lys-Gly) (interchain with G-Cter in SUMO2) linkage. Residues 126–182 (ELGSQTPESSRSEASRILDEDSWSDGEQEPITVDQTWRGDPDSEADSIDRDQEDPLK) form a disordered region. Phosphothreonine is present on T131. Basic and acidic residues predominate over residues 135-144 (SRSEASRILD). S147, S149, S168, and S172 each carry phosphoserine. A compositionally biased stretch (basic and acidic residues) spans 162–182 (WRGDPDSEADSIDRDQEDPLK). The segment at 308-364 (DVRCSNQSLPMTRHCLTHICQDTNRVLFKCCQGSEEVPCNKPVPVSLSEDPCCPLHF) is required for interaction with other NSL complex members. A disordered region spans residues 453 to 492 (QMAGDGCRSQGPRNSEKAPAPLSQSGIATANGKPEPTSVS).

Component of the NSL complex at least composed of KAT8/MOF, KANSL1, KANSL2, KANSL3, MCRS1, PHF20, OGT1/OGT, WDR5 and HCFC1. As to expression, ubiquitously expressed.

The protein resides in the nucleus. Its subcellular location is the mitochondrion. Non-catalytic component of the NSL histone acetyltransferase complex, a multiprotein complex that mediates histone H4 acetylation at 'Lys-5'- and 'Lys-8' (H4K5ac and H4K8ac) at transcription start sites and promotes transcription initiation. Required for NSL complex stability and for transcription of intraciliary transport genes in both ciliated and non-ciliated cells by regulating histone H4 acetylation at 'Lys-5'- and 'Lys-12' (H4K5ac and H4K12ac). This is necessary for cilium assembly in ciliated cells and for organization of the microtubule cytoskeleton in non-ciliated cells. Required within the NSL complex to maintain nuclear architecture stability by promoting KAT8-mediated acetylation of lamin LMNA. This Capra hircus (Goat) protein is KAT8 regulatory NSL complex subunit 2 (KANSL2).